The primary structure comprises 313 residues: Hydroxyacylglutathione hydrolase, mitochondrial (313 aa).

Zn(2+) contacts are provided by H107, H109, D111, H112, H163, and D187. Substrate contacts are provided by residues 196-198 (KFF) and 226-228 (HEY). H226 is a Zn(2+) binding site. Basic and acidic residues-rich tracts occupy residues 285–294 (VQEHAGERDP) and 301–313 (IRKE…VPKD). The tract at residues 285 to 313 (VQEHAGERDPISTMGAIRKEKDHFKVPKD) is disordered. Position 302–305 (302–305 (RKEK)) interacts with substrate.

The protein belongs to the metallo-beta-lactamase superfamily. Glyoxalase II family. In terms of assembly, monomer. The cofactor is Zn(2+).

It localises to the mitochondrion matrix. Its subcellular location is the cytoplasm. The enzyme catalyses an S-(2-hydroxyacyl)glutathione + H2O = a 2-hydroxy carboxylate + glutathione + H(+). It catalyses the reaction (R)-S-lactoylglutathione + H2O = (R)-lactate + glutathione + H(+). In terms of biological role, thiolesterase that catalyzes the hydrolysis of S-D-lactoyl-glutathione to form glutathione and D-lactic acid. The chain is Hydroxyacylglutathione hydrolase, mitochondrial (hagh) from Xenopus tropicalis (Western clawed frog).